The sequence spans 447 residues: Probable glycine dehydrogenase (decarboxylating) subunit 1 (447 aa).

This sequence belongs to the GcvP family. N-terminal subunit subfamily. As to quaternary structure, the glycine cleavage system is composed of four proteins: P, T, L and H. In this organism, the P 'protein' is a heterodimer of two subunits.

The enzyme catalyses N(6)-[(R)-lipoyl]-L-lysyl-[glycine-cleavage complex H protein] + glycine + H(+) = N(6)-[(R)-S(8)-aminomethyldihydrolipoyl]-L-lysyl-[glycine-cleavage complex H protein] + CO2. Its function is as follows. The glycine cleavage system catalyzes the degradation of glycine. The P protein binds the alpha-amino group of glycine through its pyridoxal phosphate cofactor; CO(2) is released and the remaining methylamine moiety is then transferred to the lipoamide cofactor of the H protein. The protein is Probable glycine dehydrogenase (decarboxylating) subunit 1 of Bacillus cytotoxicus (strain DSM 22905 / CIP 110041 / 391-98 / NVH 391-98).